A 177-amino-acid chain; its full sequence is ATP synthase subunit delta (177 aa).

Belongs to the ATPase delta chain family. F-type ATPases have 2 components, F(1) - the catalytic core - and F(0) - the membrane proton channel. F(1) has five subunits: alpha(3), beta(3), gamma(1), delta(1), epsilon(1). F(0) has three main subunits: a(1), b(2) and c(10-14). The alpha and beta chains form an alternating ring which encloses part of the gamma chain. F(1) is attached to F(0) by a central stalk formed by the gamma and epsilon chains, while a peripheral stalk is formed by the delta and b chains.

Its subcellular location is the cell inner membrane. In terms of biological role, f(1)F(0) ATP synthase produces ATP from ADP in the presence of a proton or sodium gradient. F-type ATPases consist of two structural domains, F(1) containing the extramembraneous catalytic core and F(0) containing the membrane proton channel, linked together by a central stalk and a peripheral stalk. During catalysis, ATP synthesis in the catalytic domain of F(1) is coupled via a rotary mechanism of the central stalk subunits to proton translocation. This protein is part of the stalk that links CF(0) to CF(1). It either transmits conformational changes from CF(0) to CF(1) or is implicated in proton conduction. In Shewanella woodyi (strain ATCC 51908 / MS32), this protein is ATP synthase subunit delta.